We begin with the raw amino-acid sequence, 477 residues long: UDP-N-acetylmuramate--L-alanine ligase (477 aa).

Residue 122–128 (GTHGKTT) participates in ATP binding.

It belongs to the MurCDEF family.

The protein localises to the cytoplasm. It carries out the reaction UDP-N-acetyl-alpha-D-muramate + L-alanine + ATP = UDP-N-acetyl-alpha-D-muramoyl-L-alanine + ADP + phosphate + H(+). It participates in cell wall biogenesis; peptidoglycan biosynthesis. Cell wall formation. In Xanthomonas oryzae pv. oryzae (strain MAFF 311018), this protein is UDP-N-acetylmuramate--L-alanine ligase.